The sequence spans 190 residues: RNA pyrophosphohydrolase (190 aa).

In terms of domain architecture, Nudix hydrolase spans G6 to C149. The short motif at G38–G59 is the Nudix box element.

It belongs to the Nudix hydrolase family. RppH subfamily. The cofactor is a divalent metal cation.

Functionally, accelerates the degradation of transcripts by removing pyrophosphate from the 5'-end of triphosphorylated RNA, leading to a more labile monophosphorylated state that can stimulate subsequent ribonuclease cleavage. This chain is RNA pyrophosphohydrolase, found in Xylella fastidiosa (strain M12).